Consider the following 349-residue polypeptide: N-acetyl-gamma-glutamyl-phosphate reductase (349 aa).

Residue cysteine 153 is part of the active site.

It belongs to the NAGSA dehydrogenase family. Type 1 subfamily.

Its subcellular location is the cytoplasm. The catalysed reaction is N-acetyl-L-glutamate 5-semialdehyde + phosphate + NADP(+) = N-acetyl-L-glutamyl 5-phosphate + NADPH + H(+). It functions in the pathway amino-acid biosynthesis; L-arginine biosynthesis; N(2)-acetyl-L-ornithine from L-glutamate: step 3/4. In terms of biological role, catalyzes the NADPH-dependent reduction of N-acetyl-5-glutamyl phosphate to yield N-acetyl-L-glutamate 5-semialdehyde. This Magnetococcus marinus (strain ATCC BAA-1437 / JCM 17883 / MC-1) protein is N-acetyl-gamma-glutamyl-phosphate reductase.